A 373-amino-acid polypeptide reads, in one-letter code: Homoserine O-acetyltransferase (373 aa).

In terms of domain architecture, AB hydrolase-1 spans 46–355; that stretch reads NAILICHPLT…NPNGHDSFLL (310 aa). Ser-151 (nucleophile) is an active-site residue. Arg-221 serves as a coordination point for substrate. Active-site residues include Asp-317 and His-350. Asp-351 contributes to the substrate binding site.

Belongs to the AB hydrolase superfamily. MetX family. As to quaternary structure, homodimer.

Its subcellular location is the cytoplasm. It catalyses the reaction L-homoserine + acetyl-CoA = O-acetyl-L-homoserine + CoA. Its pathway is amino-acid biosynthesis; L-methionine biosynthesis via de novo pathway; O-acetyl-L-homoserine from L-homoserine: step 1/1. Transfers an acetyl group from acetyl-CoA to L-homoserine, forming acetyl-L-homoserine. The polypeptide is Homoserine O-acetyltransferase (Zymomonas mobilis subsp. mobilis (strain ATCC 31821 / ZM4 / CP4)).